A 105-amino-acid polypeptide reads, in one-letter code: Nucleoid-associated protein Lm4b_02677 (105 aa).

Residues 1 to 16 (MRGMGNMQGMMKQMQK) are compositionally biased toward low complexity. The disordered stretch occupies residues 1 to 23 (MRGMGNMQGMMKQMQKMQKEMAK).

The protein belongs to the YbaB/EbfC family. Homodimer.

The protein localises to the cytoplasm. It is found in the nucleoid. In terms of biological role, binds to DNA and alters its conformation. May be involved in regulation of gene expression, nucleoid organization and DNA protection. In Listeria monocytogenes serotype 4b (strain CLIP80459), this protein is Nucleoid-associated protein Lm4b_02677.